The following is a 178-amino-acid chain: Oligoribonuclease (178 aa).

The region spanning 7-168 (LIWIDLEMTG…DDIRESIAEL (162 aa)) is the Exonuclease domain. Residue Tyr-128 is part of the active site.

It belongs to the oligoribonuclease family.

Its subcellular location is the cytoplasm. 3'-to-5' exoribonuclease specific for small oligoribonucleotides. The protein is Oligoribonuclease of Francisella tularensis subsp. holarctica (strain OSU18).